The sequence spans 574 residues: Adenine deaminase (574 aa).

It belongs to the metallo-dependent hydrolases superfamily. Adenine deaminase family. Requires Mn(2+) as cofactor.

The catalysed reaction is adenine + H2O + H(+) = hypoxanthine + NH4(+). The polypeptide is Adenine deaminase (Thermosipho africanus (strain TCF52B)).